The sequence spans 348 residues: GTP 3',8-cyclase (348 aa).

The Radical SAM core domain maps to 24 to 242 (PFGRAVTYLR…EKQFTLTDID (219 aa)). R33 is a GTP binding site. [4Fe-4S] cluster contacts are provided by C40 and C44. Y46 serves as a coordination point for S-adenosyl-L-methionine. C47 contacts [4Fe-4S] cluster. A GTP-binding site is contributed by R82. G86 lines the S-adenosyl-L-methionine pocket. T115 is a GTP binding site. Residue S139 participates in S-adenosyl-L-methionine binding. GTP is bound at residue K175. An S-adenosyl-L-methionine-binding site is contributed by M209. Positions 272 and 275 each coordinate [4Fe-4S] cluster. 277 to 279 (RVR) contacts GTP. C289 is a [4Fe-4S] cluster binding site.

It belongs to the radical SAM superfamily. MoaA family. Monomer and homodimer. [4Fe-4S] cluster is required as a cofactor.

The enzyme catalyses GTP + AH2 + S-adenosyl-L-methionine = (8S)-3',8-cyclo-7,8-dihydroguanosine 5'-triphosphate + 5'-deoxyadenosine + L-methionine + A + H(+). It functions in the pathway cofactor biosynthesis; molybdopterin biosynthesis. Functionally, catalyzes the cyclization of GTP to (8S)-3',8-cyclo-7,8-dihydroguanosine 5'-triphosphate. This chain is GTP 3',8-cyclase, found in Rhizobium leguminosarum bv. trifolii (strain WSM2304).